The sequence spans 94 residues: Co-chaperonin GroES (94 aa).

This sequence belongs to the GroES chaperonin family. In terms of assembly, heptamer of 7 subunits arranged in a ring. Interacts with the chaperonin GroEL.

It localises to the cytoplasm. In terms of biological role, together with the chaperonin GroEL, plays an essential role in assisting protein folding. The GroEL-GroES system forms a nano-cage that allows encapsulation of the non-native substrate proteins and provides a physical environment optimized to promote and accelerate protein folding. GroES binds to the apical surface of the GroEL ring, thereby capping the opening of the GroEL channel. This chain is Co-chaperonin GroES, found in Clostridium kluyveri (strain NBRC 12016).